Here is a 251-residue protein sequence, read N- to C-terminus: Probable metal-binding protein YrpE (251 aa).

The N-terminal stretch at 1–30 is a signal peptide; it reads MNILFSKRLGILTIGSLLVLAGCQTSGSSA. A compositionally biased stretch (polar residues) spans 25-41; it reads TSGSSAGESNQTTSSSA. A disordered region spans residues 25–72; that stretch reads TSGSSAGESNQTTSSSAVEEDSSKTQEQTSDSHTHEHSHDHSHAHDEE. Over residues 54–72 the composition is skewed to basic and acidic residues; that stretch reads SDSHTHEHSHDHSHAHDEE. The Zn(2+) site is built by His203, His212, His214, Glu247, and His251.

The protein belongs to the calycin superfamily. ZinT family.

The chain is Probable metal-binding protein YrpE (yrpE) from Bacillus subtilis (strain 168).